The following is a 272-amino-acid chain: Protein MGF 110-11L (272 aa).

A helical transmembrane segment spans residues 1-17 (MKVLLGLLLGYSVLILA). Asn-68 is a glycosylation site (N-linked (GlcNAc...) asparagine; by host). Helical transmembrane passes span 129–149 (QFCL…CALC) and 156–176 (TTMK…PVLN). An N-linked (GlcNAc...) asparagine; by host glycan is attached at Asn-264.

The protein belongs to the asfivirus MGF 110 family.

It is found in the host membrane. Its function is as follows. Plays a role in virus cell tropism, and may be required for efficient virus replication in macrophages. This Ornithodoros (relapsing fever ticks) protein is Protein MGF 110-11L.